Reading from the N-terminus, the 177-residue chain is Large ribosomal subunit protein uL6 (177 aa).

It belongs to the universal ribosomal protein uL6 family. In terms of assembly, part of the 50S ribosomal subunit.

Its function is as follows. This protein binds to the 23S rRNA, and is important in its secondary structure. It is located near the subunit interface in the base of the L7/L12 stalk, and near the tRNA binding site of the peptidyltransferase center. In Enterobacter sp. (strain 638), this protein is Large ribosomal subunit protein uL6.